A 504-amino-acid chain; its full sequence is Maturase K (504 aa).

Belongs to the intron maturase 2 family. MatK subfamily.

It is found in the plastid. It localises to the chloroplast. Functionally, usually encoded in the trnK tRNA gene intron. Probably assists in splicing its own and other chloroplast group II introns. This Quercus petraea (Durmast oak) protein is Maturase K.